A 416-amino-acid polypeptide reads, in one-letter code: Putative competence-damage inducible protein (416 aa).

Belongs to the CinA family.

This chain is Putative competence-damage inducible protein, found in Geobacillus sp. (strain WCH70).